Here is a 1056-residue protein sequence, read N- to C-terminus: Multidrug resistance protein MdtB (1056 aa).

12 helical membrane-spanning segments follow: residues 16–36, 342–362, 373–393, 396–416, 440–460, 472–492, 537–557, 869–889, 890–910, 911–931, 968–988, and 1002–1022; these read FILR…AGII, DVQF…YVFL, IAVP…GFSV, LTLM…IVVI, IGFT…PLLF, FAIT…TLTP, WITL…YLTI, LILA…ESFI, HPVT…LALM, VGGY…IGIV, ILMT…STGI, and GGLI…YLLF. Residues 1037 to 1056 are disordered; it reads LQSQNQRELDHSPVNHQEPL. Residues 1043–1056 show a composition bias toward basic and acidic residues; the sequence is RELDHSPVNHQEPL.

Belongs to the resistance-nodulation-cell division (RND) (TC 2.A.6) family. MdtB subfamily. Part of a tripartite efflux system composed of MdtA, MdtB and MdtC. MdtB forms a heteromultimer with MdtC.

Its subcellular location is the cell inner membrane. The protein is Multidrug resistance protein MdtB of Xenorhabdus bovienii (strain SS-2004) (Xenorhabdus nematophila subsp. bovienii).